The following is a 625-amino-acid chain: Glucose dehydrogenase [FAD, quinone] (625 aa).

The N-terminal stretch at 1–42 is a signal peptide; the sequence is MATSPSSCDCLVGVPTGPTLASTCGGSAFMLFMGLLEVFIRS. 66–95 is an FAD binding site; that stretch reads DFIVIGGGSAGSVVASRLSEVPQWKVLLIE. The Proton acceptor role is filled by His544. Sec613 is a non-standard amino acid (selenocysteine).

This sequence belongs to the GMC oxidoreductase family. It depends on FAD as a cofactor.

Its subcellular location is the secreted. It catalyses the reaction a quinone + D-glucose = D-glucono-1,5-lactone + a quinol. The chain is Glucose dehydrogenase [FAD, quinone] (Gld) from Drosophila pseudoobscura pseudoobscura (Fruit fly).